The chain runs to 148 residues: Small ribosomal subunit protein bS6 (148 aa).

Positions 97 to 148 (EEGPSAMLQRRDDRERGDRGDRGPRRDFDDRGPRRPREDDRPRRSREDEGDE) are disordered.

This sequence belongs to the bacterial ribosomal protein bS6 family.

Functionally, binds together with bS18 to 16S ribosomal RNA. The polypeptide is Small ribosomal subunit protein bS6 (Chelativorans sp. (strain BNC1)).